Here is a 457-residue protein sequence, read N- to C-terminus: Cyanidin 3-O-galactoside 2''-O-xylosyltransferase FGGT1 (457 aa).

Belongs to the UDP-glycosyltransferase family. As to expression, expressed in ovaries.

The catalysed reaction is cyanidin 3-O-beta-D-galactoside + UDP-alpha-D-xylose = cyanidin 3-O-[beta-D-xylosyl-(1-&gt;2)-beta-D-galactoside] + UDP + H(+). It participates in pigment biosynthesis; anthocyanin biosynthesis. Its function is as follows. Xylosyltransferase involved in anthocyanin biosynthesis by catalyzing the xylosylation of cyanidin 3-O-galactoside to form cyanidin 3-O-[2-O-(-xylosyl)-galactoside]. Required for the accumulation of anthocyanin in red-fleshed kiwifruit varieties. The chain is Cyanidin 3-O-galactoside 2''-O-xylosyltransferase FGGT1 from Actinidia chinensis var. chinensis (Chinese soft-hair kiwi).